Reading from the N-terminus, the 288-residue chain is Bifunctional protein FolD (288 aa).

Residues 166–168, Ser191, and Val232 contribute to the NADP(+) site; that span reads GRS.

It belongs to the tetrahydrofolate dehydrogenase/cyclohydrolase family. In terms of assembly, homodimer.

The catalysed reaction is (6R)-5,10-methylene-5,6,7,8-tetrahydrofolate + NADP(+) = (6R)-5,10-methenyltetrahydrofolate + NADPH. It catalyses the reaction (6R)-5,10-methenyltetrahydrofolate + H2O = (6R)-10-formyltetrahydrofolate + H(+). It functions in the pathway one-carbon metabolism; tetrahydrofolate interconversion. Functionally, catalyzes the oxidation of 5,10-methylenetetrahydrofolate to 5,10-methenyltetrahydrofolate and then the hydrolysis of 5,10-methenyltetrahydrofolate to 10-formyltetrahydrofolate. The chain is Bifunctional protein FolD from Roseiflexus sp. (strain RS-1).